The chain runs to 424 residues: Synaptotagmin-1 (424 aa).

The Vesicular segment spans residues 1-60 (MVSESHHEALAAPPATTVAAALPSNVTEPAAPGGGGGKEDAFSNLKKKFMNELNKIPLPP). Asn25 carries an N-linked (GlcNAc...) asparagine glycan. The helical transmembrane segment at 61 to 82 (WALIAIAIVAVLLILTCCFCLC) threads the bilayer. S-palmitoyl cysteine attachment occurs at residues Cys77, Cys78, Cys80, Cys82, and Cys85. The Cytoplasmic portion of the chain corresponds to 83–424 (KKCLFKKKNK…EVDAMLAVKK (342 aa)). The segment at 117–142 (KDQALKDDDAETGLTDGEEKEEPKEV) is disordered. Positions 124-136 (DDAETGLTDGEEK) are enriched in acidic residues. Positions 138–384 (EPKEVEKLGK…AIGKVFVGYN (247 aa)) are phospholipid binding. C2 domains follow at residues 144–263 (KLGK…EEWR) and 275–408 (KLGD…AQWH). Residues Leu174, Asp175, Asp181, Asp233, Phe234, Asp235, Ser238, Lys239, Asp241, Asp306, Asp312, Asp366, Asp368, and Asp374 each coordinate Ca(2+).

It belongs to the synaptotagmin family. In terms of assembly, homotetramer. Requires Ca(2+) as cofactor.

Its subcellular location is the cytoplasmic vesicle. The protein resides in the secretory vesicle membrane. The protein localises to the secretory vesicle. It localises to the synaptic vesicle membrane. It is found in the chromaffin granule membrane. Its subcellular location is the cytoplasm. Its function is as follows. Calcium sensor that participates in triggering neurotransmitter release at the synapse. May have a regulatory role in the membrane interactions during trafficking of synaptic vesicles at the active zone of the synapse. It binds acidic phospholipids with a specificity that requires the presence of both an acidic head group and a diacyl backbone. May play a role in dendrite formation by melanocytes. This Gallus gallus (Chicken) protein is Synaptotagmin-1 (SYT1).